A 226-amino-acid polypeptide reads, in one-letter code: Ribosomal RNA small subunit methyltransferase G (226 aa).

S-adenosyl-L-methionine-binding positions include G83, F88, 136–137 (IE), and R152. The segment at 199–226 (FSPSQSDPEGSVLKVRGLHGPDGQPHRR) is disordered.

This sequence belongs to the methyltransferase superfamily. RNA methyltransferase RsmG family.

It is found in the cytoplasm. It carries out the reaction guanosine(527) in 16S rRNA + S-adenosyl-L-methionine = N(7)-methylguanosine(527) in 16S rRNA + S-adenosyl-L-homocysteine. In terms of biological role, specifically methylates the N7 position of guanine in position 527 of 16S rRNA. This chain is Ribosomal RNA small subunit methyltransferase G, found in Parvibaculum lavamentivorans (strain DS-1 / DSM 13023 / NCIMB 13966).